Consider the following 364-residue polypeptide: MSNSLGKLFQITSFGESHGDCVGVVIDGVPAGLAINVDEIQVEVDKRKSRAKAHATPRCEDDRIEIFSGILNNFTTGAPICLVIWNKNIDSSEYERTRSKIRPGHADFTGFVKYGGFNDFRGGGRFSGRITAGHVMAGAIARKLISTIGIEVIGYTAELGGIVAKLPKTKDIRQNISQSDVNCPDLTATKKMLALIQQAAEEGDSLGGVVECLGLNLPVGLGEPVFDTLEGELAKAMFAIPAVKGVEFGAGFEASRLRGSKNNDPFSIQANHIRTTSNKCGGVLGGISDGMPLQFRVAVKPTPSISLSQPTVNIDTMTNTSLEIRGRHDTCIVPRAVSVVEAMTCIVLADLALRAGMIPRVIKQ.

Residue Arg-47 participates in NADP(+) binding. Residues Arg-125 to Ser-127, Gly-285, Lys-300 to Ser-304, and Arg-327 each bind FMN.

The protein belongs to the chorismate synthase family. As to quaternary structure, homotetramer. FMNH2 is required as a cofactor.

It carries out the reaction 5-O-(1-carboxyvinyl)-3-phosphoshikimate = chorismate + phosphate. It participates in metabolic intermediate biosynthesis; chorismate biosynthesis; chorismate from D-erythrose 4-phosphate and phosphoenolpyruvate: step 7/7. Its function is as follows. Catalyzes the anti-1,4-elimination of the C-3 phosphate and the C-6 proR hydrogen from 5-enolpyruvylshikimate-3-phosphate (EPSP) to yield chorismate, which is the branch point compound that serves as the starting substrate for the three terminal pathways of aromatic amino acid biosynthesis. This reaction introduces a second double bond into the aromatic ring system. In Dehalococcoides mccartyi (strain ATCC BAA-2266 / KCTC 15142 / 195) (Dehalococcoides ethenogenes (strain 195)), this protein is Chorismate synthase.